Reading from the N-terminus, the 311-residue chain is Malate dehydrogenase (311 aa).

NAD(+)-binding positions include 7-13 (GAAGGIG) and D34. Positions 81 and 87 each coordinate substrate. Residues N94 and 117–119 (ITN) contribute to the NAD(+) site. Residues N119 and R153 each contribute to the substrate site. H177 serves as the catalytic Proton acceptor. M227 contacts NAD(+).

This sequence belongs to the LDH/MDH superfamily. MDH type 1 family. In terms of assembly, homodimer.

It carries out the reaction (S)-malate + NAD(+) = oxaloacetate + NADH + H(+). Its function is as follows. Catalyzes the reversible oxidation of malate to oxaloacetate. This Shewanella denitrificans (strain OS217 / ATCC BAA-1090 / DSM 15013) protein is Malate dehydrogenase.